Reading from the N-terminus, the 301-residue chain is Enolase-phosphatase E1 (301 aa).

Aspartate 22 and glutamate 24 together coordinate Mg(2+). Substrate-binding positions include serine 163–serine 164 and lysine 197. Aspartate 222 serves as a coordination point for Mg(2+). The interval alanine 273–phenylalanine 301 is disordered.

The protein belongs to the HAD-like hydrolase superfamily. MasA/MtnC family. As to quaternary structure, monomer. Requires Mg(2+) as cofactor.

The protein resides in the cytoplasm. It is found in the nucleus. The catalysed reaction is 5-methylsulfanyl-2,3-dioxopentyl phosphate + H2O = 1,2-dihydroxy-5-(methylsulfanyl)pent-1-en-3-one + phosphate. Its pathway is amino-acid biosynthesis; L-methionine biosynthesis via salvage pathway; L-methionine from S-methyl-5-thio-alpha-D-ribose 1-phosphate: step 3/6. The protein operates within amino-acid biosynthesis; L-methionine biosynthesis via salvage pathway; L-methionine from S-methyl-5-thio-alpha-D-ribose 1-phosphate: step 4/6. Functionally, bifunctional enzyme that catalyzes the enolization of 2,3-diketo-5-methylthiopentyl-1-phosphate (DK-MTP-1-P) into the intermediate 2-hydroxy-3-keto-5-methylthiopentenyl-1-phosphate (HK-MTPenyl-1-P), which is then dephosphorylated to form the acireductone 1,2-dihydroxy-3-keto-5-methylthiopentene (DHK-MTPene). This chain is Enolase-phosphatase E1, found in Monosiga brevicollis (Choanoflagellate).